A 187-amino-acid chain; its full sequence is UPF0301 protein LPC_2717 (187 aa).

Belongs to the UPF0301 (AlgH) family.

The polypeptide is UPF0301 protein LPC_2717 (Legionella pneumophila (strain Corby)).